The sequence spans 216 residues: 2',3'-cyclic-nucleotide 3'-phosphodiesterase (216 aa).

The Proton donor/acceptor role is filled by His-39. Thr-41 is a substrate binding site. Residue His-137 is the Proton donor/acceptor of the active site. Substrate contacts are provided by Ser-139 and Tyr-142.

Belongs to the 2H phosphoesterase superfamily. CPD1 family.

It is found in the golgi apparatus. The catalysed reaction is a nucleoside 2',3'-cyclic phosphate + H2O = a nucleoside 2'-phosphate + H(+). Functionally, involved in the metabolism of ADP-ribose 1',2'-cyclic phosphate which is produced as a consequence of tRNA splicing. The sequence is that of 2',3'-cyclic-nucleotide 3'-phosphodiesterase (CPD1) from Eremothecium gossypii (strain ATCC 10895 / CBS 109.51 / FGSC 9923 / NRRL Y-1056) (Yeast).